The chain runs to 202 residues: MSSKLRLGVAGPVGSGKTALVEAMCRRLRDQLQLAVVTNDIYTQEDAEFLTRVGALEPERIRGVETGGCPHTAIREDCSINRAAVEDLERNFPDLDVVLVESGGDNLAASFSPELVDLCIYVIDVAAGDKIPRKGGPGITRSDLLVINKIDLAVHVGADLEVMKRDTTRMRGERPWCFTNLRSGDGLESVLHFLLQQLPNRP.

Residue Gly-11 to Thr-18 participates in GTP binding.

This sequence belongs to the SIMIBI class G3E GTPase family. UreG subfamily. In terms of assembly, homodimer. UreD, UreF and UreG form a complex that acts as a GTP-hydrolysis-dependent molecular chaperone, activating the urease apoprotein by helping to assemble the nickel containing metallocenter of UreC. The UreE protein probably delivers the nickel.

It is found in the cytoplasm. Facilitates the functional incorporation of the urease nickel metallocenter. This process requires GTP hydrolysis, probably effectuated by UreG. In Prochlorococcus marinus (strain MIT 9313), this protein is Urease accessory protein UreG.